A 1090-amino-acid chain; its full sequence is MPVFHTKTIENILEPVAQQLHYVLAMAEKNATSVDEVRHLGTSMPNLDRFASRSALALSRASSRRSIPEYITPDTVRHVVNDDDCPVCQLMMPRGKDGCVSRLVILHEEANDGNAMPDLTGPVGMVSRAVGNLIQVGYDTCDHSDDRILQQDMPPALQRVEGSSKLLEESSYSLKHDPYSVPARKKLIDGARGILQGTSALLLCFDESEVRKIIRVCRKANDYVAVSEVIESMADLQQFVKDISPVLHDVTNDVNLRQQELTHQVHREILIRCMDSIKVIAPILICSMKTSIELGTPHPRQGHAEAIANRNFMSQRMTEEMNEIIRVLQLTTYDEDEWDADNVTVMRKALSAAKSLLTAALDWLADPHARSGAVGEKAIRRICEYADRISARALPEDAQSIKRSIFEITSFTDELCNLRNNGQPDRENLAAQTARRLKDLVGSQNSSGLMGDALQNAQRHGGANPAHTAAGRLEQALRWLDNPGLDDGGLGLQALRLLTADARKLADRLNPQDRNRLLGLCSDIDRLAAQLADLERRGLGNSPEAHQIRNQLKNALRDLGDFMRRVLTDRVVDDFADITTPLKQFVEAVHADPYDPNREQNFVDKSQRLTDHSQSMTTTARLVASCGPSKSKKTVEAILDTAEKVEQLTPQLVNAGRVRLHNPGSEQHFENIHKQYADALHRLRSHVDDAIDTGEFVRASETAMRRYTNHCEGAINGADAHGLVNNSSQIARLGNRVLMTAQNEADNSEEPSFVSRVRNAADQLHNAIPPMVNNAKQIAQNPHDQYAAQNWRGTNDHLLNSVRAVGDAITGVPMSNGRHSSYQESISRASPYNPPPPSSQVIRSVNASPPTAPIIHNKMIIREDIPAPPRPPPPVELSPPPRPPPPPEYDEEEETRAFWERYPLPQASHQPMLAAAHNLHNELKQWSSQENDIVAAAKRMAILMARLSQLVRGEGGTKKDLINCSKAIADSSEEVTRLAVQLARLCTDIKMRTALLQVSERIPTIATQLKVLSTVKATMLGSANVIGPYGQPVEGSEEDDEAMQQLVHNAQNLMQSVKDVVRAAEAASIKIRTNSGLRLRWLRKPMWSNF.

2 repeat units span residues 339 to 446 and 455 to 561. Residues 339 to 561 form a 2 X repeats region; that stretch reads DADNVTVMRK…LKNALRDLGD (223 aa). Disordered regions lie at residues 811–842 and 864–895; these read GVPM…SQVI and DIPA…EEET. Positions 817–830 are enriched in polar residues; the sequence is GRHSSYQESISRAS. The span at 866–887 shows a compositional bias: pro residues; the sequence is PAPPRPPPPVELSPPPRPPPPP.

This sequence belongs to the vinculin/alpha-catenin family. May interact with sorb-1. Expressed in gonadal sheath cells and the spermatheca. Expressed in body wall muscles.

The protein localises to the cytoplasm. Its subcellular location is the cytoskeleton. The protein resides in the cell junction. It is found in the adherens junction. It localises to the cell membrane. The protein localises to the focal adhesion. Functionally, involved in cell adhesion. May be involved in the attachment of the actin-based microfilaments to the plasma membrane. Involved in ovulation. This Caenorhabditis elegans protein is Vinculin.